Here is a 346-residue protein sequence, read N- to C-terminus: Biotin synthase (346 aa).

In terms of domain architecture, Radical SAM core spans N41–S265. 3 residues coordinate [4Fe-4S] cluster: C56, C60, and C63. Positions 100, 131, 191, and 263 each coordinate [2Fe-2S] cluster.

Belongs to the radical SAM superfamily. Biotin synthase family. Homodimer. [4Fe-4S] cluster serves as cofactor. The cofactor is [2Fe-2S] cluster.

The catalysed reaction is (4R,5S)-dethiobiotin + (sulfur carrier)-SH + 2 reduced [2Fe-2S]-[ferredoxin] + 2 S-adenosyl-L-methionine = (sulfur carrier)-H + biotin + 2 5'-deoxyadenosine + 2 L-methionine + 2 oxidized [2Fe-2S]-[ferredoxin]. The protein operates within cofactor biosynthesis; biotin biosynthesis; biotin from 7,8-diaminononanoate: step 2/2. Catalyzes the conversion of dethiobiotin (DTB) to biotin by the insertion of a sulfur atom into dethiobiotin via a radical-based mechanism. This is Biotin synthase from Pseudoalteromonas translucida (strain TAC 125).